The sequence spans 306 residues: Recombination-associated protein RdgC (306 aa).

It belongs to the RdgC family.

Its subcellular location is the cytoplasm. It localises to the nucleoid. Functionally, may be involved in recombination. The chain is Recombination-associated protein RdgC from Pseudomonas syringae pv. tomato (strain ATCC BAA-871 / DC3000).